The primary structure comprises 382 residues: Intermediate transcription factor 3 large subunit (382 aa).

This sequence belongs to the poxviruses A23 family. Heterodimer of a 45 kDa and a 32 kDa subunit.

Functionally, acts with RNA polymerase to initiate transcription from intermediate gene promoters. This chain is Intermediate transcription factor 3 large subunit (VITF3L), found in Camelus.